The sequence spans 505 residues: Lysine--tRNA ligase (505 aa).

Residues glutamate 415 and glutamate 422 each coordinate Mg(2+).

It belongs to the class-II aminoacyl-tRNA synthetase family. Homodimer. It depends on Mg(2+) as a cofactor.

The protein localises to the cytoplasm. It catalyses the reaction tRNA(Lys) + L-lysine + ATP = L-lysyl-tRNA(Lys) + AMP + diphosphate. This is Lysine--tRNA ligase from Serratia proteamaculans (strain 568).